The following is a 340-amino-acid chain: Chitinase 7 (340 aa).

Positions 1–32 are cleaved as a signal peptide; sequence MIAARAANLQVAMKALALAVLALAYAAATARA. A Chitin-binding type-1 domain is found at 33–73; the sequence is EQCGRQAGGARCPNRLCCSRWGWCGLTDDYCKGGCQSQCRV. 7 disulfide bridges follow: Cys35-Cys50, Cys44-Cys56, Cys49-Cys63, Cys67-Cys71, Cys118-Cys173, Cys185-Cys193, and Cys293-Cys323.

The protein belongs to the glycosyl hydrolase 19 family. Chitinase class I subfamily. As to expression, expressed in pistils, stamens and lodicules.

The catalysed reaction is Random endo-hydrolysis of N-acetyl-beta-D-glucosaminide (1-&gt;4)-beta-linkages in chitin and chitodextrins.. In terms of biological role, hydrolyzes chitin and may play a role in defense against fungal pathogens containing chitin. The sequence is that of Chitinase 7 (Cht7) from Oryza sativa subsp. indica (Rice).